The following is a 64-amino-acid chain: Alpha-conotoxin-like Ac1.1a (64 aa).

Positions 1-21 are cleaved as a signal peptide; that stretch reads MGMRMMFTLFLLVVLTTTVVS. Residues 22-47 constitute a propeptide that is removed on maturation; it reads YPSDSASDGRDDEAKDERSDMYELKR. Disulfide bonds link Cys51/Cys56 and Cys52/Cys62. The residue at position 62 (Cys62) is a Cysteine amide.

It belongs to the conotoxin A superfamily. As to expression, expressed by the venom duct.

It is found in the secreted. Its function is as follows. Alpha-conotoxins act on postsynaptic membranes, they bind to the nicotinic acetylcholine receptors (nAChR) and thus inhibit them. This is Alpha-conotoxin-like Ac1.1a from Conus achatinus (Little frog cone).